Reading from the N-terminus, the 311-residue chain is N-acetylmuramic acid 6-phosphate etherase (311 aa).

The SIS domain occupies 66–230 (VVEAFEADGR…TTAAMVRLGK (165 aa)). The Proton donor role is filled by E94. E125 is an active-site residue.

The protein belongs to the GCKR-like family. MurNAc-6-P etherase subfamily. As to quaternary structure, homodimer.

The enzyme catalyses N-acetyl-D-muramate 6-phosphate + H2O = N-acetyl-D-glucosamine 6-phosphate + (R)-lactate. It functions in the pathway amino-sugar metabolism; N-acetylmuramate degradation. In terms of biological role, specifically catalyzes the cleavage of the D-lactyl ether substituent of MurNAc 6-phosphate, producing GlcNAc 6-phosphate and D-lactate. In Salinibacter ruber (strain DSM 13855 / M31), this protein is N-acetylmuramic acid 6-phosphate etherase.